The following is a 241-amino-acid chain: MTAENRPPVGDKQDKGQAVQEMFASIAPRYDLLNRVLSLGVDRGWRRAAAAEALAHSPRRVLDVATGTGDFAIELKERAPQVEIVGSDFVPQMLDLARQKAGAKQLSIRFEEGDALRLPYPDASFDAVTCAFGFRNFADYTQGLAEMWRVLTPGGRLVLLEFPPPASGLFGAVFRLYFQHVLPRIGALVSGNAGAYTYLPESVLAFPEPERLAQMMRATGFRTRYRALTFGIAGMWVGDKR.

Residues Thr-68, Asp-88, and 114–115 (DA) contribute to the S-adenosyl-L-methionine site.

This sequence belongs to the class I-like SAM-binding methyltransferase superfamily. MenG/UbiE family.

It catalyses the reaction a 2-demethylmenaquinol + S-adenosyl-L-methionine = a menaquinol + S-adenosyl-L-homocysteine + H(+). It participates in quinol/quinone metabolism; menaquinone biosynthesis; menaquinol from 1,4-dihydroxy-2-naphthoate: step 2/2. Methyltransferase required for the conversion of demethylmenaquinol (DMKH2) to menaquinol (MKH2). The sequence is that of Demethylmenaquinone methyltransferase from Deinococcus radiodurans (strain ATCC 13939 / DSM 20539 / JCM 16871 / CCUG 27074 / LMG 4051 / NBRC 15346 / NCIMB 9279 / VKM B-1422 / R1).